A 930-amino-acid chain; its full sequence is Serine/threonine-protein kinase PknD (930 aa).

In terms of domain architecture, Protein kinase spans 4–291 (YDIIRMIGKG…ALKADIEQHL (288 aa)). Residues 10–18 (IGKGGMGEV) and lysine 33 each bind ATP. Aspartate 138 acts as the Proton acceptor in catalysis.

This sequence belongs to the protein kinase superfamily. Ser/Thr protein kinase family. Autophosphorylated on serine and threonine residues.

The enzyme catalyses L-seryl-[protein] + ATP = O-phospho-L-seryl-[protein] + ADP + H(+). It catalyses the reaction L-threonyl-[protein] + ATP = O-phospho-L-threonyl-[protein] + ADP + H(+). Its function is as follows. Together with the serine/threonine kinase Pkn1, may play a role in the specific interactions with host proteins during intracellular growth. In Chlamydia caviae (strain ATCC VR-813 / DSM 19441 / 03DC25 / GPIC) (Chlamydophila caviae), this protein is Serine/threonine-protein kinase PknD.